The sequence spans 1325 residues: ATP-binding cassette sub-family C member 4 (1325 aa).

The ABC transmembrane type-1 1 domain occupies 92–377; the sequence is YLVLGIFTLI…FFPSAIERVS (286 aa). The next 7 helical transmembrane spans lie at 93 to 113, 136 to 156, 207 to 227, 228 to 248, 328 to 348, 351 to 371, and 440 to 460; these read LVLG…PIFL, AYAT…HLYF, QVTV…AVTA, LLWM…IILL, SKII…VITA, VFVA…FFPS, and LLAV…AVLG. Residues 410 to 633 form the ABC transporter 1 domain; that stretch reads VHVQDFTAFW…GIDFGSLLKK (224 aa). ATP is bound at residue 445–452; sequence GPVGAGKS. Threonine 646 and threonine 648 each carry phosphothreonine. Low complexity predominate over residues 657 to 667; the sequence is SSVWSQQSSRP. A disordered region spans residues 657-688; sequence SSVWSQQSSRPSLKDGALESQDTENVPVTLSE. A phosphoserine mark is found at serine 664 and serine 668. Residues 710 to 730 form a helical membrane-spanning segment; it reads HWIVFIFLILLNTAAQVAYVL. The ABC transmembrane type-1 2 domain occupies 714 to 1005; the sequence is FIFLILLNTA…CVRQSAEVEN (292 aa). 2 N-linked (GlcNAc...) asparagine glycosylation sites follow: asparagine 746 and asparagine 754. The next 6 membrane-spanning stretches (helical) occupy residues 771–791, 836–856, 858–878, 954–974, 977–997, and 1038–1058; these read LTVA…YVLV, LPLT…VVSV, VAVI…FIFL, AICA…AKTL, GQVG…QWCV, and EGVI…PLVL. Residues 1041–1274 enclose the ABC transporter 2 domain; the sequence is IIFDNVNFMY…KESLFYKMVQ (234 aa). Position 1075–1082 (1075–1082) interacts with ATP; it reads GRTGAGKS. The PDZ-binding signature appears at 1322-1325; it reads ETAL.

It belongs to the ABC transporter superfamily. ABCC family. Conjugate transporter (TC 3.A.1.208) subfamily. Interacts (via PDZ-binding motif) with SNX27 (via PDZ domain); this interaction accelerates MRP4 internalization. Mg(2+) serves as cofactor. Post-translationally, N-glycosylated; leading to substrate-selective effects on its transport activity. Widely expressed, with particularly high levels in prostate, but is barely detectable in liver. sinusoidal membrane of hepatocytes.

The protein resides in the basolateral cell membrane. It is found in the apical cell membrane. The enzyme catalyses ATP + H2O + xenobioticSide 1 = ADP + phosphate + xenobioticSide 2.. The catalysed reaction is an S-substituted glutathione(in) + ATP + H2O = an S-substituted glutathione(out) + ADP + phosphate + H(+). It carries out the reaction 17beta-estradiol 17-O-(beta-D-glucuronate)(in) + ATP + H2O = 17beta-estradiol 17-O-(beta-D-glucuronate)(out) + ADP + phosphate + H(+). It catalyses the reaction dehydroepiandrosterone 3-sulfate(in) + ATP + H2O = dehydroepiandrosterone 3-sulfate(out) + ADP + phosphate + H(+). The enzyme catalyses leukotriene C4(in) + ATP + H2O = leukotriene C4(out) + ADP + phosphate + H(+). The catalysed reaction is leukotriene B4(in) + ATP + H2O = leukotriene B4(out) + ADP + phosphate + H(+). It carries out the reaction urate(in) + ATP + H2O = urate(out) + ADP + phosphate + H(+). It catalyses the reaction 3',5'-cyclic GMP(in) + ATP + H2O = 3',5'-cyclic GMP(out) + ADP + phosphate + H(+). The enzyme catalyses 3',5'-cyclic AMP(in) + ATP + H2O = 3',5'-cyclic AMP(out) + ADP + phosphate + H(+). The catalysed reaction is prostaglandin E2(in) + ATP + H2O = prostaglandin E2(out) + ADP + phosphate + H(+). It carries out the reaction prostaglandin E1(in) + ATP + H2O = prostaglandin E1(out) + ADP + phosphate + H(+). It catalyses the reaction glycodeoxycholate(in) + glutathione(in) + ATP + H2O = glycodeoxycholate(out) + glutathione(out) + ADP + phosphate + H(+). The enzyme catalyses cholate(in) + glutathione(in) + ATP + H2O = cholate(out) + glutathione(out) + ADP + phosphate + H(+). The catalysed reaction is glycocholate(in) + glutathione(in) + ATP + H2O = glycocholate(out) + glutathione(out) + ADP + phosphate + H(+). It carries out the reaction taurocholate(in) + glutathione(in) + ATP + H2O = taurocholate(out) + glutathione(out) + ADP + phosphate + H(+). It catalyses the reaction glycochenodeoxycholate(in) + glutathione(in) + ATP + H2O = glycochenodeoxycholate(out) + glutathione(out) + ADP + phosphate + H(+). The enzyme catalyses taurochenodeoxycholate(in) + glutathione(in) + ATP + H2O = taurochenodeoxycholate(out) + glutathione(out) + ADP + phosphate + H(+). The catalysed reaction is glycoursodeoxycholate(in) + glutathione(in) + ATP + H2O = glycoursodeoxycholate(out) + glutathione(out) + ADP + phosphate + H(+). It carries out the reaction tauroursodeoxycholate(in) + glutathione(in) + ATP + H2O = tauroursodeoxycholate(out) + glutathione(out) + ADP + phosphate + H(+). Its activity is regulated as follows. GSH stimulates the transport of MRP4. Urate inhibits methotrexate transport but stimulates cGMP transport. Nonsteroidal anti-inflammatory drugs (NSAIDs) strongly suppress the transport of MRP4 substrates. In terms of biological role, ATP-dependent transporter of the ATP-binding cassette (ABC) family that actively extrudes physiological compounds and xenobiotics from cells. Transports a range of endogenous molecules that have a key role in cellular communication and signaling, including cyclic nucleotides such as cyclic AMP (cAMP) and cyclic GMP (cGMP), bile acids, steroid conjugates, urate, and prostaglandins. Mediates the ATP-dependent efflux of glutathione conjugates such as leukotriene C4 (LTC4) and leukotriene B4 (LTB4) too. The presence of GSH is necessary for the ATP-dependent transport of LTB4, whereas GSH is not required for the transport of LTC4. Mediates the cotransport of bile acids with reduced glutathione (GSH). Transports a wide range of drugs and their metabolites, including anticancer, antiviral and antibiotics molecules. Confers resistance to anticancer agents such as methotrexate. In Homo sapiens (Human), this protein is ATP-binding cassette sub-family C member 4 (ABCC4).